A 351-amino-acid polypeptide reads, in one-letter code: UPF0764 protein C16orf89 homolog (351 aa).

The signal sequence occupies residues 1–25 (MKSLKMLYPLFMLLVLSSKIDLSNQ).

It belongs to the UPF0764 family. In terms of assembly, homodimer.

The protein localises to the secreted. The sequence is that of UPF0764 protein C16orf89 homolog from Danio rerio (Zebrafish).